The primary structure comprises 233 residues: MKEDPYLDVKKRLAREAAALVTSGMLVGLGSGSTSREFIKAIAERLAKENLDICAVASSQESYSLASSLGIPLIDDENFTSVDLVVDGADEIDPQLRMIKGGGGAIFREKILLQSSQRRLILADESKSVKVLGKFGLPVEISPYGRSSIIAALEAIGYLGNLRKNSRGGFFITNNGNYIYDIHTPNIYPHPEEDLLKLLQIHGIIEVGFVIANVEVWFGYTNGQICKENTGIV.

Substrate contacts are provided by residues 31–34 (SGST), 87–90 (DGAD), and 100–103 (KGGG). E109 acts as the Proton acceptor in catalysis. Residue K127 coordinates substrate.

It belongs to the ribose 5-phosphate isomerase family. As to quaternary structure, homodimer.

It carries out the reaction aldehydo-D-ribose 5-phosphate = D-ribulose 5-phosphate. It functions in the pathway carbohydrate degradation; pentose phosphate pathway; D-ribose 5-phosphate from D-ribulose 5-phosphate (non-oxidative stage): step 1/1. In terms of biological role, catalyzes the reversible conversion of ribose-5-phosphate to ribulose 5-phosphate. The chain is Ribose-5-phosphate isomerase A from Chlamydia felis (strain Fe/C-56) (Chlamydophila felis).